Reading from the N-terminus, the 289-residue chain is ATP phosphoribosyltransferase (289 aa).

The protein belongs to the ATP phosphoribosyltransferase family. Long subfamily. It depends on Mg(2+) as a cofactor.

The protein localises to the cytoplasm. It carries out the reaction 1-(5-phospho-beta-D-ribosyl)-ATP + diphosphate = 5-phospho-alpha-D-ribose 1-diphosphate + ATP. Its pathway is amino-acid biosynthesis; L-histidine biosynthesis; L-histidine from 5-phospho-alpha-D-ribose 1-diphosphate: step 1/9. Feedback inhibited by histidine. In terms of biological role, catalyzes the condensation of ATP and 5-phosphoribose 1-diphosphate to form N'-(5'-phosphoribosyl)-ATP (PR-ATP). Has a crucial role in the pathway because the rate of histidine biosynthesis seems to be controlled primarily by regulation of HisG enzymatic activity. In Methanosarcina acetivorans (strain ATCC 35395 / DSM 2834 / JCM 12185 / C2A), this protein is ATP phosphoribosyltransferase.